The sequence spans 160 residues: Deoxyuridine 5'-triphosphate nucleotidohydrolase (160 aa).

Substrate contacts are provided by residues 79-81, Asn92, 96-98, and Lys106; these read RSG and TVD.

Belongs to the dUTPase family. Requires Mg(2+) as cofactor.

It catalyses the reaction dUTP + H2O = dUMP + diphosphate + H(+). It functions in the pathway pyrimidine metabolism; dUMP biosynthesis; dUMP from dCTP (dUTP route): step 2/2. This enzyme is involved in nucleotide metabolism: it produces dUMP, the immediate precursor of thymidine nucleotides and it decreases the intracellular concentration of dUTP so that uracil cannot be incorporated into DNA. The polypeptide is Deoxyuridine 5'-triphosphate nucleotidohydrolase (Rhizobium meliloti (strain 1021) (Ensifer meliloti)).